The following is a 693-amino-acid chain: Homoaconitase, mitochondrial (693 aa).

The N-terminal 17 residues, 1-17, are a transit peptide targeting the mitochondrion; sequence MFRVQRLRMFSTSRALY. [4Fe-4S] cluster contacts are provided by C338, C405, and C408.

This sequence belongs to the aconitase/IPM isomerase family. [4Fe-4S] cluster serves as cofactor.

Its subcellular location is the mitochondrion. The enzyme catalyses (2R,3S)-homoisocitrate = cis-homoaconitate + H2O. Its pathway is amino-acid biosynthesis; L-lysine biosynthesis via AAA pathway; L-alpha-aminoadipate from 2-oxoglutarate: step 3/5. Its function is as follows. Catalyzes the reversible hydration of cis-homoaconitate to (2R,3S)-homoisocitrate, a step in the alpha-aminoadipate pathway for lysine biosynthesis. This Kluyveromyces lactis (strain ATCC 8585 / CBS 2359 / DSM 70799 / NBRC 1267 / NRRL Y-1140 / WM37) (Yeast) protein is Homoaconitase, mitochondrial (LYS4).